Consider the following 129-residue polypeptide: NADPH-dependent 7-cyano-7-deazaguanine reductase (129 aa).

The active-site Thioimide intermediate is the Cys42. Residue Asp49 is the Proton donor of the active site. Substrate contacts are provided by residues 64 to 66 (VEL) and 83 to 84 (HE).

It belongs to the GTP cyclohydrolase I family. QueF type 1 subfamily.

It localises to the cytoplasm. It carries out the reaction 7-aminomethyl-7-carbaguanine + 2 NADP(+) = 7-cyano-7-deazaguanine + 2 NADPH + 3 H(+). The protein operates within tRNA modification; tRNA-queuosine biosynthesis. Its function is as follows. Catalyzes the NADPH-dependent reduction of 7-cyano-7-deazaguanine (preQ0) to 7-aminomethyl-7-deazaguanine (preQ1). The protein is NADPH-dependent 7-cyano-7-deazaguanine reductase of Synechococcus sp. (strain CC9605).